The chain runs to 503 residues: Arabinose import ATP-binding protein AraG (503 aa).

ABC transporter domains follow at residues 5-240 (LRFD…MVGR) and 253-497 (LGDV…LPQG). 37–44 (GENGAGKS) serves as a coordination point for ATP.

This sequence belongs to the ABC transporter superfamily. Arabinose importer (TC 3.A.1.2.2) family. The complex is composed of two ATP-binding proteins (AraG), two transmembrane proteins (AraH) and a solute-binding protein (AraF).

It is found in the cell inner membrane. It carries out the reaction L-arabinose(out) + ATP + H2O = L-arabinose(in) + ADP + phosphate + H(+). Functionally, part of the ABC transporter complex AraFGH involved in arabinose import. Responsible for energy coupling to the transport system. The protein is Arabinose import ATP-binding protein AraG of Burkholderia pseudomallei (strain K96243).